The chain runs to 868 residues: LPS-assembly protein LptD (868 aa).

The N-terminal stretch at 1–24 (MLKGIHKYLLMCFGTVLFTVQANA) is a signal peptide.

The protein belongs to the LptD family. Component of the lipopolysaccharide transport and assembly complex. Interacts with LptE and LptA.

The protein resides in the cell outer membrane. In terms of biological role, together with LptE, is involved in the assembly of lipopolysaccharide (LPS) at the surface of the outer membrane. The chain is LPS-assembly protein LptD from Francisella tularensis subsp. tularensis (strain FSC 198).